A 126-amino-acid polypeptide reads, in one-letter code: Large ribosomal subunit protein uL24 (126 aa).

Residues 1–23 (MKFSRDVTSSRRKQRKAHFGAPS) are disordered.

The protein belongs to the universal ribosomal protein uL24 family. As to quaternary structure, component of the large ribosomal subunit (LSU). Mature yeast ribosomes consist of a small (40S) and a large (60S) subunit. The 40S small subunit contains 1 molecule of ribosomal RNA (18S rRNA) and at least 33 different proteins. The large 60S subunit contains 3 rRNA molecules (25S, 5.8S and 5S rRNA) and at least 46 different proteins.

It localises to the cytoplasm. It is found in the nucleus. The protein localises to the nucleolus. Component of the ribosome, a large ribonucleoprotein complex responsible for the synthesis of proteins in the cell. The small ribosomal subunit (SSU) binds messenger RNAs (mRNAs) and translates the encoded message by selecting cognate aminoacyl-transfer RNA (tRNA) molecules. The large subunit (LSU) contains the ribosomal catalytic site termed the peptidyl transferase center (PTC), which catalyzes the formation of peptide bonds, thereby polymerizing the amino acids delivered by tRNAs into a polypeptide chain. The nascent polypeptides leave the ribosome through a tunnel in the LSU and interact with protein factors that function in enzymatic processing, targeting, and the membrane insertion of nascent chains at the exit of the ribosomal tunnel. The chain is Large ribosomal subunit protein uL24 (rpl26) from Schizosaccharomyces pombe (strain 972 / ATCC 24843) (Fission yeast).